The sequence spans 298 residues: tRNA pseudouridine synthase A (298 aa).

Asp-56 acts as the Nucleophile in catalysis. A substrate-binding site is contributed by Tyr-125.

This sequence belongs to the tRNA pseudouridine synthase TruA family. As to quaternary structure, homodimer.

The catalysed reaction is uridine(38/39/40) in tRNA = pseudouridine(38/39/40) in tRNA. In terms of biological role, formation of pseudouridine at positions 38, 39 and 40 in the anticodon stem and loop of transfer RNAs. In Bifidobacterium animalis subsp. lactis (strain AD011), this protein is tRNA pseudouridine synthase A.